The primary structure comprises 487 residues: MTPRRSLSSSDSNDKSPSVSVVAKKARSESVEGIEKKTTPGRVKKIRSEVCTTIVKAGEFDSVALRKVNSLPSPNSEKSDTKTEQEVTIIENSKIPEEVKEFGVCQEMIVSAKSNENEQIDNGDQEIGDQDDYEEDGDEEEEREVEKKSVDVKEINVAKENRVGGVEIKKFSQFQNRTSPSPSSVRKISPPVIKRATSVYSAPPNSTSSTDRFAEQEDNFTHSQSKLQSLVDLVMWRDVSRSTLVFGFGTFLIISSSYANDLNFSFISVVAYMGLIYLGLMFVLKSLIHRGMVEEERHKVVGVREEDVKRMLRLIMPYLNESLHQLRALFSGDPSTTLKMGVVLFVLARCGSSITLWNLAKFGFLGAFTIPKIFISYSTHFSAYGNFWMRRFRDAWESCNHKKAVALALFTLVWNLSSVTARVWAAFMLLVAFRYYQHKMIWTTDQADDDEDDNEEEEAEEEKEQVPPKHKRAPPHMMMPNKLKKIS.

Residues 1–22 (MTPRRSLSSSDSNDKSPSVSVV) show a composition bias toward low complexity. Disordered stretches follow at residues 1 to 43 (MTPR…PGRV), 65 to 86 (LRKV…TEQE), and 113 to 149 (KSNE…EKKS). A compositionally biased stretch (basic and acidic residues) spans 26 to 38 (ARSESVEGIEKKT). A compositionally biased stretch (acidic residues) spans 118–143 (EQIDNGDQEIGDQDDYEEDGDEEEER). The Reticulon domain maps to 230–419 (LVDLVMWRDV…FTLVWNLSSV (190 aa)). Helical transmembrane passes span 242–262 (STLV…ANDL), 264–284 (FSFI…MFVL), 354–374 (ITLW…PKIF), and 413–433 (VWNL…LVAF). Residues 446-463 (QADDDEDDNEEEEAEEEK) show a composition bias toward acidic residues. Residues 446–487 (QADDDEDDNEEEEAEEEKEQVPPKHKRAPPHMMMPNKLKKIS) are disordered.

The protein localises to the endoplasmic reticulum membrane. This is Reticulon-like protein B21 (RTNLB21) from Arabidopsis thaliana (Mouse-ear cress).